Consider the following 172-residue polypeptide: Monopolar attachment protein 1 (172 aa).

Basic residues predominate over residues lysine 15–serine 30. Positions lysine 15–leucine 43 are disordered. Residues threonine 31 to leucine 43 are compositionally biased toward polar residues. The POLO box domain (PBD)-binding motif lies at serine 100 to proline 102.

As to quaternary structure, interacts with rec8, Interacts with plo1.

Its subcellular location is the nucleus. The protein localises to the chromosome. It is found in the centromere. The protein resides in the kinetochore. Plays an important role in chromosome segregation during meiosis I by allowing meiotic rec8 to establish cohesion at the centromeric central core and thereby promote the side-by-side structure of kinetochores at meiosis I. Enables monopolar attachment during meiosis I. Required to facilitate kinetochore mono-orientation during meiosis I, when kinetochores on sister chromosomes face the same direction and are thus captured and pulled by spindle fibers from the same pole. Acts in collaboration with plo1. The protein is Monopolar attachment protein 1 (moa1) of Schizosaccharomyces pombe (strain 972 / ATCC 24843) (Fission yeast).